The following is a 286-amino-acid chain: Elongation factor Ts (286 aa).

The involved in Mg(2+) ion dislocation from EF-Tu stretch occupies residues 82–85 (TDFV).

It belongs to the EF-Ts family.

The protein resides in the cytoplasm. Functionally, associates with the EF-Tu.GDP complex and induces the exchange of GDP to GTP. It remains bound to the aminoacyl-tRNA.EF-Tu.GTP complex up to the GTP hydrolysis stage on the ribosome. The sequence is that of Elongation factor Ts from Hahella chejuensis (strain KCTC 2396).